The sequence spans 83 residues: MSSGGLLLLLGLLTLWMELTPVSSKNRPPFCNLLPEPGRCNAIVRAFYYNSRPRKCLEFPYGGCGGNANNFKTIEECQRTCAG.

Positions 1-24 are cleaved as a signal peptide; sequence MSSGGLLLLLGLLTLWMELTPVSS. The 51-residue stretch at 31 to 81 folds into the BPTI/Kunitz inhibitor domain; it reads CNLLPEPGRCNAIVRAFYYNSRPRKCLEFPYGGCGGNANNFKTIEECQRTC. 3 disulfides stabilise this stretch: cysteine 31–cysteine 81, cysteine 40–cysteine 64, and cysteine 56–cysteine 77.

Belongs to the venom Kunitz-type family. Expressed by the venom gland.

The protein resides in the secreted. Functionally, shows weak binding and inhibition of MMP-2 and shows an activity in inhibiting migration and invasion of neuroblastoma. This is Kunitz-type serine protease inhibitor PILP-2 from Bungarus multicinctus (Many-banded krait).